Here is a 122-residue protein sequence, read N- to C-terminus: MNAVTETVDLQAPPSPLIFTDSAAAKVKDLLAEEGNPELKLRVFVQGGGCSGFQYGFTFDEAVNEDDTVLDKNGVQLLVDPMSFQYLVGAEIDYKEDLEGAQFVIRNPNASTTCGCGSSFSV.

Iron-sulfur cluster-binding residues include Cys50, Cys114, and Cys116.

Belongs to the HesB/IscA family. Homodimer. Iron-sulfur cluster serves as cofactor.

Its function is as follows. Required for insertion of 4Fe-4S clusters. In Bordetella petrii (strain ATCC BAA-461 / DSM 12804 / CCUG 43448), this protein is Putative iron-sulfur cluster insertion protein ErpA.